The chain runs to 583 residues: Isocitrate dehydrogenase kinase/phosphatase (583 aa).

ATP-binding positions include 315–321 (APGIRGM) and lysine 336. Residue aspartate 371 is part of the active site.

The protein belongs to the AceK family.

The protein localises to the cytoplasm. It catalyses the reaction L-seryl-[isocitrate dehydrogenase] + ATP = O-phospho-L-seryl-[isocitrate dehydrogenase] + ADP + H(+). Functionally, bifunctional enzyme which can phosphorylate or dephosphorylate isocitrate dehydrogenase (IDH) on a specific serine residue. This is a regulatory mechanism which enables bacteria to bypass the Krebs cycle via the glyoxylate shunt in response to the source of carbon. When bacteria are grown on glucose, IDH is fully active and unphosphorylated, but when grown on acetate or ethanol, the activity of IDH declines drastically concomitant with its phosphorylation. This chain is Isocitrate dehydrogenase kinase/phosphatase, found in Salmonella heidelberg (strain SL476).